The sequence spans 421 residues: Solute carrier family 35 member F3 (421 aa).

Residues 25–53 (EGEERPREPPGPAEAQAPAGTEAGGRTSR) are disordered. Residues 37–49 (AEAQAPAGTEAGG) show a composition bias toward low complexity. A run of 10 helical transmembrane segments spans residues 66–86 (VFWG…STQL), 98–118 (FTLT…YYAG), 149–169 (VFFT…YLYL), 179–199 (DVSV…WIVL), 208–228 (IVAA…DGFH), 232–252 (VIGI…KVLF), 266–286 (LFLS…PVIL), 305–325 (LCGF…GIAV), 326–346 (TYPT…AVVD), and 352–372 (IVFN…FLLL). The interval 394-421 (KEETAESSGDLGTGPQSRSRRARPSFAR) is disordered. Over residues 411 to 421 (RSRRARPSFAR) the composition is skewed to basic residues.

Belongs to the SLC35F solute transporter family.

It is found in the membrane. The catalysed reaction is thiamine(in) = thiamine(out). Functionally, mediates thiamine transport. This chain is Solute carrier family 35 member F3 (Slc35f3), found in Mus musculus (Mouse).